The primary structure comprises 669 residues: Zinc finger CCCH domain-containing protein 17 (669 aa).

A compositionally biased stretch (low complexity) spans 1-11 (MFAPATQPQQQ). Residues 1 to 23 (MFAPATQPQQQHEQKKQSETVSS) form a disordered region. 3 consecutive C3H1-type zinc fingers follow at residues 34–58 (DCVYFLASPLTCKKGPECEYRHSEY), 60–86 (RMNPRDCYYWLNGNCLNPKCGFRHPPL), and 114–141 (AKQPVPCLFFQKGMCMKGDMCSFLHTPN). 4 disordered regions span residues 150–175 (PVEAKPATDPQCSKKPIENNTEEKKL), 285–306 (VEDRYGRRSQERGNSEYDPDFS), 376–589 (GMRL…VMEE), and 642–669 (EEGEEEATEGGEGEGEEDIEKKTVEMLS). 6 stretches are compositionally biased toward basic and acidic residues: residues 164 to 175 (KPIENNTEEKKL), 285 to 299 (VEDRYGRRSQERGNS), 392 to 406 (SMDRGYRESRRDTPR), 420 to 464 (KLRE…EENH), 478 to 499 (RRREMEDERKSAPKSSREESKP), and 547 to 579 (NNKDETISKEEAGDEIKLITEEKTEVVSEPKAE). Composition is skewed to acidic residues over residues 580 to 589 (VEEEGTVMEE) and 642 to 659 (EEGEEEATEGGEGEGEED). Over residues 660–669 (IEKKTVEMLS) the composition is skewed to basic and acidic residues.

This is Zinc finger CCCH domain-containing protein 17 from Arabidopsis thaliana (Mouse-ear cress).